The sequence spans 151 residues: Protein Turandot Z (151 aa).

The N-terminal stretch at 1–23 is a signal peptide; it reads MSRLIHLSFVLALLACLTGTISA.

Belongs to the Turandot family.

It is found in the secreted. In terms of biological role, a humoral factor that may play a role in stress tolerance. The polypeptide is Protein Turandot Z (Drosophila persimilis (Fruit fly)).